Reading from the N-terminus, the 403-residue chain is Imidazolonepropionase (403 aa).

The Fe(3+) site is built by His-74 and His-76. Positions 74 and 76 each coordinate Zn(2+). Residues Arg-83, Tyr-146, and His-179 each contribute to the 4-imidazolone-5-propanoate site. N-formimidoyl-L-glutamate is bound at residue Tyr-146. His-242 provides a ligand contact to Fe(3+). Residue His-242 coordinates Zn(2+). Gln-245 is a 4-imidazolone-5-propanoate binding site. Fe(3+) is bound at residue Asp-317. Asp-317 is a Zn(2+) binding site. Asn-319 and Gly-321 together coordinate N-formimidoyl-L-glutamate. Position 322 (Thr-322) interacts with 4-imidazolone-5-propanoate.

This sequence belongs to the metallo-dependent hydrolases superfamily. HutI family. It depends on Zn(2+) as a cofactor. The cofactor is Fe(3+).

The protein resides in the cytoplasm. It carries out the reaction 4-imidazolone-5-propanoate + H2O = N-formimidoyl-L-glutamate. Its pathway is amino-acid degradation; L-histidine degradation into L-glutamate; N-formimidoyl-L-glutamate from L-histidine: step 3/3. Functionally, catalyzes the hydrolytic cleavage of the carbon-nitrogen bond in imidazolone-5-propanoate to yield N-formimidoyl-L-glutamate. It is the third step in the universal histidine degradation pathway. This chain is Imidazolonepropionase, found in Sphingopyxis alaskensis (strain DSM 13593 / LMG 18877 / RB2256) (Sphingomonas alaskensis).